We begin with the raw amino-acid sequence, 345 residues long: Protein D345L (345 aa).

Belongs to the asfivirus D345L family. Interacts with IKKA/CHUK and IKBKB.

It localises to the host cytoplasm. Its function is as follows. Plays a role in the negative regulation of host NF-kappa-B signaling pathway. Mechanistically, recruits IKKA/CHUK and IKBKB to suppress their kinase activity towards NFKBIA. The polypeptide is Protein D345L (Ornithodoros (relapsing fever ticks)).